The sequence spans 345 residues: Dihydroorotase (345 aa).

Zn(2+) is bound by residues H14 and H16. Substrate-binding positions include 16–18 (HLR) and N42. Zn(2+)-binding residues include K100, H137, and H175. K100 is subject to N6-carboxylysine. Residue H137 coordinates substrate. Substrate is bound at residue L220. D248 serves as a coordination point for Zn(2+). D248 is an active-site residue. Substrate contacts are provided by H252 and A264.

The protein belongs to the metallo-dependent hydrolases superfamily. DHOase family. Class II DHOase subfamily. As to quaternary structure, homodimer. The cofactor is Zn(2+).

It carries out the reaction (S)-dihydroorotate + H2O = N-carbamoyl-L-aspartate + H(+). Its pathway is pyrimidine metabolism; UMP biosynthesis via de novo pathway; (S)-dihydroorotate from bicarbonate: step 3/3. Catalyzes the reversible cyclization of carbamoyl aspartate to dihydroorotate. This Nitrosococcus oceani (strain ATCC 19707 / BCRC 17464 / JCM 30415 / NCIMB 11848 / C-107) protein is Dihydroorotase.